Reading from the N-terminus, the 46-residue chain is Esculentin-1 (46 aa).

Cysteine 40 and cysteine 46 are disulfide-bonded.

Belongs to the frog skin active peptide (FSAP) family. Brevinin subfamily. Expressed by the skin glands.

It localises to the secreted. Functionally, shows antibacterial activity against representative Gram-negative and Gram-positive bacterial species, and hemolytic activity. The chain is Esculentin-1 from Pelophylax lessonae (Pool frog).